The sequence spans 199 residues: MCSNEYPWVCGVDEAGRGPLAGPVFAACVILDPASPIDGLADSKTLTEGKRNSLTLAIKAYSIAWAIGFASVREIDRLNILQASLLAMKRAIGKLPVTPARVLVDGNHSPRLKFPVTTIVRGDSLVPEISAASILAKTARDAEMMALHRRFPRYGFDQHKGYSTEQHLAALKIHGVSIVHRRSFAPVRELMANEKDAES.

The RNase H type-2 domain occupies 7–196 (PWVCGVDEAG…VRELMANEKD (190 aa)). A divalent metal cation-binding residues include aspartate 13, glutamate 14, and aspartate 105.

Belongs to the RNase HII family. Requires Mn(2+) as cofactor. Mg(2+) is required as a cofactor.

It is found in the cytoplasm. It carries out the reaction Endonucleolytic cleavage to 5'-phosphomonoester.. Endonuclease that specifically degrades the RNA of RNA-DNA hybrids. The protein is Ribonuclease HII of Nitrosospira multiformis (strain ATCC 25196 / NCIMB 11849 / C 71).